We begin with the raw amino-acid sequence, 1049 residues long: Tegument protein pp150 (1049 aa).

Disordered regions lie at residues 397–549 and 659–945; these read EERQ…DPRF and PFRM…YPAV. The segment covering 428 to 439 has biased composition (acidic residues); sequence ADEDDDDDDDDE. The segment covering 452 to 462 has biased composition (gly residues); the sequence is SGKGAASGGGV. Low complexity predominate over residues 463–474; it reads SSIFSGLLSSGS. Positions 475 to 490 are enriched in polar residues; sequence QKPTSGPLNIPQQQQR. A compositionally biased stretch (basic and acidic residues) spans 509–525; that stretch reads VRRDSAWDVRPLTETRG. Positions 672-688 are enriched in low complexity; it reads TVSTTPRRPSTPRAAVT. Positions 710–722 are enriched in acidic residues; sequence PVEDSEEEDDDSS. A compositionally biased stretch (polar residues) spans 731-743; that stretch reads GHTTPSSDYNNDV. The span at 745 to 757 shows a compositional bias: low complexity; it reads SPPSQTPEQSTPS. 3 stretches are compositionally biased toward polar residues: residues 766–776, 791–800, and 808–835; these read SPMTTTSTSQK, RAQTVTSTPV, and VSGT…SRNV. Low complexity-rich tracts occupy residues 836-855, 866-884, 912-928, and 936-945; these read TSGA…ASAS, SPAT…SPAK, VVGR…APGR, and ASTTPTYPAV. The O-linked (GlcNAc) serine; by host glycan is linked to Ser-922. Ser-953 carries O-linked (GlcNAc) serine; by host glycosylation. The disordered stretch occupies residues 1006–1032; sequence DLSSPQKSGTGPQPGSAGMGGAKTPSD. The segment covering 1008-1018 has biased composition (polar residues); that stretch reads SSPQKSGTGPQ.

The protein belongs to the herpesviridae large structural phosphoprotein family. In terms of assembly, interacts with host BICD1 and RAB6A. Interacts with small capsid protein UL48A; this interaction links together the capsid and pp150. Interacts with host CCNA2. Post-translationally, phosphorylated by host CCNA2.

It localises to the virion tegument. Its subcellular location is the host cytoplasm. The protein localises to the host nucleus. Its function is as follows. Participates in the last steps of viral maturation and release. Associates with nuclear capsids prior to DNA encapsidation and later preserves the integrity of nucleocapsids through secondary envelopment at the assembly compartment. Interacts with host CCNA2 and thereby blocks the onset of lytic gene expression to promote establishment of a quiescent state of infection in undifferentiated cells. This is Tegument protein pp150 (UL32) from Homo sapiens (Human).